The primary structure comprises 548 residues: 1,3-beta-glucanosyltransferase gel4 (548 aa).

The N-terminal stretch at 1-25 (MKFVYAAAGASLVGSALATLPVIEA) is a signal peptide. Residues Asn51 and Asn69 are each glycosylated (N-linked (GlcNAc...) asparagine). A disulfide bridge links Cys88 with Cys117. (1,3-beta-D-glucosyl)n contacts are provided by residues Tyr106, 133-141 (SAPSESINR), Asn174, and Glu175. Glu175 acts as the Proton donor in catalysis. A glycan (N-linked (GlcNAc...) asparagine) is linked at Asn181. Asp217 and Arg222 together coordinate (1,3-beta-D-glucosyl)n. 5 cysteine pairs are disulfide-bonded: Cys231-Cys364, Cys249-Cys280, Cys386-Cys437, Cys395-Cys461, and Cys414-Cys419. Glu277 functions as the Nucleophile in the catalytic mechanism. Tyr309 lines the (1,3-beta-D-glucosyl)n pocket. N-linked (GlcNAc...) asparagine glycosylation is present at Asn425. The GPI-like-anchor amidated alanine moiety is linked to residue Ala519. Positions 520–548 (SPMAVKVGNWQFGAYIATALFAGVGMLVL) are cleaved as a propeptide — removed in mature form.

It belongs to the glycosyl hydrolase 72 family. Post-translationally, the GPI-like anchor contains a phosphoceramide lipid group.

It is found in the cell membrane. Splits internally a 1,3-beta-glucan molecule and transfers the newly generated reducing end (the donor) to the non-reducing end of another 1,3-beta-glucan molecule (the acceptor) forming a 1,3-beta linkage, resulting in the elongation of 1,3-beta-glucan chains in the cell wall. Involved in cell wall morphogenesis. The polypeptide is 1,3-beta-glucanosyltransferase gel4 (gel4) (Aspergillus fumigatus (strain ATCC MYA-4609 / CBS 101355 / FGSC A1100 / Af293) (Neosartorya fumigata)).